A 471-amino-acid chain; its full sequence is Protein hedgehog (471 aa).

A lipid anchor (N-palmitoyl cysteine) is attached at Cys85. Ca(2+) is bound by residues Glu149, Glu150, Asp155, Thr185, Glu186, Asp189, and Asp191. Gly257 is lipidated: Cholesterol glycine ester.

Belongs to the hedgehog family. In terms of assembly, interacts with shf. Interacts with ptc and CG5504/l(2)tid. Post-translationally, the C-terminal part of the hedgehog protein precursor displays an autoproteolysis activity that results in the cleavage of the full-length protein into two parts (N-product and C-product). In addition, the C-terminal part displays a cholesterol transferase activity that results by the covalent attachment of a cholesterol moiety to the C-terminal of the newly generated N-product. The N-product is the active species in both local and long-range signaling, whereas the C-product has no signaling activity. Cholesterylation is required for N-product targeting to lipid rafts and multimerization. In terms of processing, N-palmitoylation by Rasp of the hedgehog N-product, within the secretory pathway, is required for the embryonic and larval patterning activities of the hedgehog signal. In embryos, expression starts at stage 5 as a few stripes at the anterior and posterior ends, this expands to 17 stripes during stages 8-11. Expression is also seen in CNS and some PNS cells until stage 13-14, and in foregut, hindgut and salivary glands. In larvae, expression is seen in the posterior compartment of the wing, leg and antennal imaginal disks. In adults, high level of expression in specific regions of the proventriculus and hindgut, with slightly lower levels of expression in the posterior midgut. Relatively low levels of expression in the anterior midgut region.

Its subcellular location is the nucleus. It localises to the cytoplasm. The protein resides in the cell membrane. The enzyme catalyses glycyl-L-cysteinyl-[protein] + cholesterol + H(+) = [protein]-C-terminal glycyl cholesterol ester + N-terminal L-cysteinyl-[protein]. In terms of biological role, the C-terminal part of the hedgehog protein precursor displays an autoproteolysis activity that results in the cleavage of the full-length protein into two parts (N-product and C-product). In addition, the C-terminal part displays a cholesterol transferase activity that results by the covalent attachment of a cholesterol moiety to the C-terminal of the newly generated N-product. Once cleaved, the C-product has no signaling activity and diffuses from the cell. Functionally, the dually lipidated hedgehog protein N-product is a morphogen which is essential for a variety of patterning events during development. Establishes the anterior-posterior axis of the embryonic segments and patterns the larval imaginal disks. Binds to the patched (ptc) receptor, which functions in association with smoothened (smo), to activate the transcription of target genes wingless (wg), decapentaplegic (dpp) and ptc. In the absence of hh, ptc represses the constitutive signaling activity of smo through fused (fu). Essential component of a signaling pathway which regulates the Duox-dependent gut immune response to bacterial uracil; required to activate Cad99C-dependent endosome formation, norpA-dependent Ca2+ mobilization and p38 MAPK, which are essential steps in the Duox-dependent production of reactive oxygen species (ROS) in response to intestinal bacterial infection. During photoreceptor differentiation, it up-regulates transcription of Ubr3, which in turn promotes the hh-signaling pathway by mediating the ubiquitination and degradation of cos. The polypeptide is Protein hedgehog (Drosophila melanogaster (Fruit fly)).